Reading from the N-terminus, the 121-residue chain is Small ribosomal subunit protein uS13 (121 aa).

Positions 96–121 (PVRGQNTKNNARTRKGKAVAIAGKKK) are disordered. A compositionally biased stretch (basic residues) spans 106–121 (ARTRKGKAVAIAGKKK).

This sequence belongs to the universal ribosomal protein uS13 family. As to quaternary structure, part of the 30S ribosomal subunit. Forms a loose heterodimer with protein S19. Forms two bridges to the 50S subunit in the 70S ribosome.

Located at the top of the head of the 30S subunit, it contacts several helices of the 16S rRNA. In the 70S ribosome it contacts the 23S rRNA (bridge B1a) and protein L5 of the 50S subunit (bridge B1b), connecting the 2 subunits; these bridges are implicated in subunit movement. Contacts the tRNAs in the A and P-sites. This Streptococcus pneumoniae serotype 4 (strain ATCC BAA-334 / TIGR4) protein is Small ribosomal subunit protein uS13.